The sequence spans 1405 residues: Protein translocase subunit SecA (1405 aa).

The interval 1-1099 (MHMKIKKFKK…SDYKKLNEDE (1099 aa)) is protein translocase subunit SecA. Residues Gln88, 106-110 (GEGKS), and Asp494 each bind ATP. The interval 1100–1405 (SDDDIKAFYK…LDYLKENNKK (306 aa)) is unknown.

Belongs to the SecA family. As to quaternary structure, monomer and homodimer. Part of the essential Sec protein translocation apparatus which comprises SecA, SecYEG and auxiliary proteins SecDF. Other proteins may also be involved.

It localises to the cell membrane. It is found in the cytoplasm. The catalysed reaction is ATP + H2O + cellular proteinSide 1 = ADP + phosphate + cellular proteinSide 2.. Functionally, part of the Sec protein translocase complex. Interacts with the SecYEG preprotein conducting channel. Has a central role in coupling the hydrolysis of ATP to the transfer of proteins into and across the cell membrane, serving as an ATP-driven molecular motor driving the stepwise translocation of polypeptide chains across the membrane. The polypeptide is Protein translocase subunit SecA (Malacoplasma penetrans (strain HF-2) (Mycoplasma penetrans)).